A 225-amino-acid polypeptide reads, in one-letter code: Membrane protein (225 aa).

The Virion surface portion of the chain corresponds to 1–20 (MSNETNCTLDFEQSVELFKE). A helical transmembrane segment spans residues 21 to 41 (YNLFITAFLLFLTIILQYGYA). The Intravirion segment spans residues 42-51 (TRSKFIYILK). A helical transmembrane segment spans residues 52–72 (MIVLWCFWPLNIAVGVISCIY). Residues 73–77 (PPNTG) lie on the Virion surface side of the membrane. Residues 78-98 (GLVAAIILTVFACLSFVGYWI) traverse the membrane as a helical segment. The Intravirion segment spans residues 99–225 (QSIRLFKRCR…VATGGSSLYT (127 aa)).

This sequence belongs to the gammacoronaviruses M protein family. Homomultimer. Interacts with envelope E protein in the budding compartment of the host cell, which is located between endoplasmic reticulum and the Golgi complex. Forms a complex with HE and S proteins. Interacts with nucleocapsid N protein. This interaction probably participates in RNA packaging into the virus.

It localises to the virion membrane. It is found in the host Golgi apparatus membrane. In terms of biological role, component of the viral envelope that plays a central role in virus morphogenesis and assembly via its interactions with other viral proteins. This is Membrane protein from Gallus gallus (Chicken).